We begin with the raw amino-acid sequence, 77 residues long: MKLIIFTGLVLFAIVSLIEAQAENEKACLPQYQVCTDAPGNCCSDLVCDCYGRYKSGARIGRNCFCLQKGVIYKRED.

A signal peptide spans 1–20 (MKLIIFTGLVLFAIVSLIEA). Positions 21 to 26 (QAENEK) are excised as a propeptide.

This sequence belongs to the neurotoxin 19 (CSTX) family. 08 (U8-Lctx) subfamily. In terms of processing, contains 4 disulfide bonds. As to expression, expressed by the venom gland.

The protein localises to the secreted. In Lycosa singoriensis (Wolf spider), this protein is U8-lycotoxin-Ls1u.